Reading from the N-terminus, the 251-residue chain is MSGHSKWATTKHKKAVIDARRGKLFAKLIKTVEVAAKTGGGDPAGNPTLADAIAKAKSQSVPNDNIERAVKRGSGELAGGVNYEDITYEAYGPGGVAILVECLTDNRNRAASDVRVAITRNGGTVADPGSVSYLFNRKGVVLIEKTAGLTEDDVLLAVLDAGAEEVNDVGEAFEVVSEATDLHAVRVAATDAGLAVTSADISWLPSVSVSLEAEPAAKVLKLIEAVEDLDDVQNVWFNADISDDVMELVGS.

This sequence belongs to the TACO1 family.

Its subcellular location is the cytoplasm. The chain is Probable transcriptional regulatory protein Francci3_1368 from Frankia casuarinae (strain DSM 45818 / CECT 9043 / HFP020203 / CcI3).